We begin with the raw amino-acid sequence, 88 residues long: UPF0335 protein NGR_c28390 (88 aa).

This sequence belongs to the UPF0335 family.

In Sinorhizobium fredii (strain NBRC 101917 / NGR234), this protein is UPF0335 protein NGR_c28390.